A 311-amino-acid polypeptide reads, in one-letter code: Tricarboxylate transport protein, mitochondrial (311 aa).

A propeptide spans 1-13 (removed in mature form); the sequence is MAAARAPRALTSA. The segment covering 1 to 15 has biased composition (low complexity); it reads MAAARAPRALTSASP. The tract at residues 1-22 is disordered; it reads MAAARAPRALTSASPGSGKAKL. Solcar repeat units lie at residues 23–111, 122–208, and 218–303; these read THPG…LSNH, TRGL…LRNW, and MNPL…VVKL. 3 helical membrane passes run 29 to 46, 86 to 105, and 129 to 143; these read ILAGGLAGGIEICITFPT, GLSSLLYGSIPKAAVRFGTF, and LGAGVPEAVVVVCPM. At Ser-156 the chain carries Phosphoserine. 3 helical membrane-spanning segments follow: residues 183–202, 224–241, and 278–297; these read GLTATVLKQGSNQGIRFFVM, GVFGAIAGAASVFGNTPL, and GTVPRLGRVCLDVAIVFIIY.

This sequence belongs to the mitochondrial carrier (TC 2.A.29) family. In terms of processing, possesses a short cleavable presequence, which, however, is found to be dispensable both for targeting to mitochondria and insertion into the inner membrane. However, the presequence is required to keep SLC25A1 in a soluble state and thus in an import-competent state. Mature SLC25A1 lacking the presequence is prone to aggregation.

It is found in the mitochondrion inner membrane. It localises to the mitochondrion membrane. It carries out the reaction (S)-malate(in) + citrate(out) = (S)-malate(out) + citrate(in). The enzyme catalyses D-threo-isocitrate(in) + citrate(out) = D-threo-isocitrate(out) + citrate(in). It catalyses the reaction citrate(out) + succinate(in) = citrate(in) + succinate(out). The catalysed reaction is phosphoenolpyruvate(in) + citrate(out) = phosphoenolpyruvate(out) + citrate(in). It carries out the reaction cis-aconitate(in) + citrate(out) = cis-aconitate(out) + citrate(in). The enzyme catalyses trans-aconitate(in) + citrate(out) = trans-aconitate(out) + citrate(in). It catalyses the reaction maleate(in) + citrate(out) = maleate(out) + citrate(in). Functionally, mitochondrial electroneutral antiporter that exports citrate from the mitochondria into the cytosol in exchange for malate. Also able to mediate the exchange of citrate for isocitrate, phosphoenolpyruvate, cis-aconitate and to a lesser extent trans-aconitate, maleate and succinate. In the cytoplasm, citrate plays important roles in fatty acid and sterol synthesis, regulation of glycolysis, protein acetylation, and other physiopathological processes. The polypeptide is Tricarboxylate transport protein, mitochondrial (SLC25A1) (Bos taurus (Bovine)).